The sequence spans 358 residues: Secreted protein RBT4 (358 aa).

Positions 1 to 19 are cleaved as a signal peptide; sequence MKFSQVATTAAIFAGLTTA. Composition is skewed to low complexity over residues 48–63, 153–174, and 189–200; these read VTGG…QSAA, TTEV…VATP, and AATTASGSSSGS. Disordered regions lie at residues 48–98 and 144–203; these read VTGG…DGGN and GFPS…SNDF. The SCP domain occupies 216-332; it reads LDAHNKKRAR…NWGLYVVCSY (117 aa).

It belongs to the CRISP family.

It localises to the secreted. Functionally, secreted protein that acts as a virulence factor during infections such as in posttraumatic corneal infections. Acts as an important antigen in patients with systemic candidiasis and plays a role in the protection against phagocyte attack. The sequence is that of Secreted protein RBT4 (RBT4) from Candida albicans (strain SC5314 / ATCC MYA-2876) (Yeast).